The following is a 962-amino-acid chain: Integrator complex subunit 7 (962 aa).

A phosphoserine mark is found at S338 and S809.

Belongs to the Integrator subunit 7 family. Component of the Integrator complex, composed of core subunits INTS1, INTS2, INTS3, INTS4, INTS5, INTS6, INTS7, INTS8, INTS9/RC74, INTS10, INTS11/CPSF3L, INTS12, INTS13, INTS14 and INTS15. The core complex associates with protein phosphatase 2A subunits PPP2CA and PPP2R1A, to form the Integrator-PP2A (INTAC) complex. Interacts with NABP2.

It localises to the nucleus. The protein localises to the chromosome. It is found in the cytoplasm. In terms of biological role, component of the integrator complex, a multiprotein complex that terminates RNA polymerase II (Pol II) transcription in the promoter-proximal region of genes. The integrator complex provides a quality checkpoint during transcription elongation by driving premature transcription termination of transcripts that are unfavorably configured for transcriptional elongation: the complex terminates transcription by (1) catalyzing dephosphorylation of the C-terminal domain (CTD) of Pol II subunit POLR2A/RPB1 and SUPT5H/SPT5, (2) degrading the exiting nascent RNA transcript via endonuclease activity and (3) promoting the release of Pol II from bound DNA. The integrator complex is also involved in terminating the synthesis of non-coding Pol II transcripts, such as enhancer RNAs (eRNAs), small nuclear RNAs (snRNAs), telomerase RNAs and long non-coding RNAs (lncRNAs). May be not involved in the recruitment of cytoplasmic dynein to the nuclear envelope by different components of the INT complex. Plays a role in DNA damage response (DDR) signaling during the S phase. In Bos taurus (Bovine), this protein is Integrator complex subunit 7 (INTS7).